We begin with the raw amino-acid sequence, 120 residues long: Probable non-functional immunoglobulin kappa variable 2D-24 (120 aa).

An N-terminal signal peptide occupies residues 1–19 (MRLLAQLLGLLMLWVPGSS). An Ig-like domain is found at 20-120 (GDIVMTQTPL…YYCTQATQFP (101 aa)). Residues 21 to 43 (DIVMTQTPLSSPVTLGQPASISF) are framework-1. The interval 44-59 (RSSQSLVHSDGNTYLS) is complementarity-determining-1. The segment at 60–74 (WLQQRPGQPPRLLIY) is framework-2. The interval 75-81 (KVSNRFS) is complementarity-determining-2. Positions 82-113 (GVPDRFSGSGAGTDFTLKISRVEAEDVGVYYC) are framework-3. The tract at residues 114–120 (TQATQFP) is complementarity-determining-3.

In terms of assembly, most probably, the immunoglobulin is not assembled due to incorrect folding of light chain. Immunoglobulins are composed of two identical heavy chains and two identical light chains; disulfide-linked.

The protein resides in the secreted. It localises to the cell membrane. Its function is as follows. Probable non-functional open reading frame (ORF) of V region of the variable domain of immunoglobulin light chains. Non-functional ORF generally cannot participate in the synthesis of a productive immunoglobulin chain due to altered V-(D)-J or switch recombination and/or splicing site (at mRNA level) and/or conserved amino acid change (protein level). Immunoglobulins, also known as antibodies, are membrane-bound or secreted glycoproteins produced by B lymphocytes. In the recognition phase of humoral immunity, the membrane-bound immunoglobulins serve as receptors which, upon binding of a specific antigen, trigger the clonal expansion and differentiation of B lymphocytes into immunoglobulins-secreting plasma cells. Secreted immunoglobulins mediate the effector phase of humoral immunity, which results in the elimination of bound antigens. The antigen binding site is formed by the variable domain of one heavy chain, together with that of its associated light chain. Thus, each immunoglobulin has two antigen binding sites with remarkable affinity for a particular antigen. The variable domains are assembled by a process called V-(D)-J rearrangement and can then be subjected to somatic hypermutations which, after exposure to antigen and selection, allow affinity maturation for a particular antigen. This chain is Probable non-functional immunoglobulin kappa variable 2D-24, found in Homo sapiens (Human).